The sequence spans 900 residues: Trehalose-phosphatase (900 aa).

Disordered regions lie at residues 76-109 and 874-900; these read SRLF…EEDP and VKHS…SYKN. A compositionally biased stretch (basic and acidic residues) spans 82 to 108; the sequence is KNRDKSENGEKGENDLHAKEEREKEED.

In the C-terminal section; belongs to the trehalose phosphatase family. This sequence in the N-terminal section; belongs to the glycosyltransferase 20 family. It depends on Mg(2+) as a cofactor.

The enzyme catalyses alpha,alpha-trehalose 6-phosphate + H2O = alpha,alpha-trehalose + phosphate. It functions in the pathway carbohydrate biosynthesis. In terms of biological role, phosphatase catalytic subunit of the trehalose synthase complex that catalyzes the production of trehalose from glucose-6-phosphate and UDP-alpha-D-glucose in a two step process. In Zygosaccharomyces rouxii, this protein is Trehalose-phosphatase.